A 192-amino-acid chain; its full sequence is Ribosome maturation factor RimM (192 aa).

In terms of domain architecture, PRC barrel spans 99 to 186; that stretch reads ADEYHVSELV…RIEIAPPPGL (88 aa).

This sequence belongs to the RimM family. As to quaternary structure, binds ribosomal protein uS19.

It is found in the cytoplasm. Its function is as follows. An accessory protein needed during the final step in the assembly of 30S ribosomal subunit, possibly for assembly of the head region. Essential for efficient processing of 16S rRNA. May be needed both before and after RbfA during the maturation of 16S rRNA. It has affinity for free ribosomal 30S subunits but not for 70S ribosomes. The chain is Ribosome maturation factor RimM from Microcystis aeruginosa (strain NIES-843 / IAM M-2473).